A 573-amino-acid polypeptide reads, in one-letter code: Patellin-1 (573 aa).

Disordered regions lie at residues 1–74 (MAQE…SVKE) and 111–202 (REFT…DGTK). N-acetylalanine is present on alanine 2. Positions 18 to 28 (VKEKPITDKEV) are enriched in basic and acidic residues. At threonine 29 the chain carries Phosphothreonine. Residues 35–74 (AEKEEVAAPVSDEKAVPEKEVTPEKEAPAAEAEKSVSVKE) show a composition bias toward basic and acidic residues. Residues 89-157 (AEEVQKKALE…TTEVKVEEEK (69 aa)) adopt a coiled-coil conformation. At threonine 118 the chain carries Phosphothreonine. 2 stretches are compositionally biased toward basic and acidic residues: residues 120-169 (VKEE…EKSS) and 176-190 (TKSE…EVTT). Serine 195 carries the post-translational modification Phosphoserine. A Glycyl lysine isopeptide (Lys-Gly) (interchain with G-Cter in ubiquitin) cross-link involves residue lysine 285. The CRAL-TRIO domain maps to 295 to 468 (SGEEVSEFEK…KYGGLSKDTP (174 aa)). In terms of domain architecture, GOLD spans 471–572 (EETITEAIVK…KKKVLYRFKT (102 aa)).

It belongs to the patellin family. As to quaternary structure, interacts with the deubiquitinating enzyme AMSH3. Expressed ubiquitously with higher levels in expanding roots and leaves (at protein level).

It is found in the membrane. The protein resides in the cytoplasm. Its function is as follows. Carrier protein that may be involved in membrane-trafficking events associated with cell plate formation during cytokinesis. Binds to some hydrophobic molecules and promotes their transfer between the different cellular sites. Binds to phosphoinositides with a preference for PtdIns(5)P, PtdIns(4,5)P2 and PtdIns(3)P. This Arabidopsis thaliana (Mouse-ear cress) protein is Patellin-1 (PATL1).